Reading from the N-terminus, the 203-residue chain is Ribosomal RNA large subunit methyltransferase E (203 aa).

S-adenosyl-L-methionine contacts are provided by G60, W62, D79, D95, and D119. Catalysis depends on K159, which acts as the Proton acceptor.

This sequence belongs to the class I-like SAM-binding methyltransferase superfamily. RNA methyltransferase RlmE family.

Its subcellular location is the cytoplasm. The catalysed reaction is uridine(2552) in 23S rRNA + S-adenosyl-L-methionine = 2'-O-methyluridine(2552) in 23S rRNA + S-adenosyl-L-homocysteine + H(+). Its function is as follows. Specifically methylates the uridine in position 2552 of 23S rRNA at the 2'-O position of the ribose in the fully assembled 50S ribosomal subunit. This Pelagibacter ubique (strain HTCC1062) protein is Ribosomal RNA large subunit methyltransferase E.